Consider the following 616-residue polypeptide: Dihydroxy-acid dehydratase (616 aa).

Mg(2+) is bound at residue Asp81. Cys122 lines the [2Fe-2S] cluster pocket. Mg(2+) is bound by residues Asp123 and Lys124. Residue Lys124 is modified to N6-carboxylysine. A [2Fe-2S] cluster-binding site is contributed by Cys195. Glu491 is a Mg(2+) binding site. Residue Ser517 is the Proton acceptor of the active site.

This sequence belongs to the IlvD/Edd family. Homodimer. The cofactor is [2Fe-2S] cluster. Mg(2+) is required as a cofactor.

The catalysed reaction is (2R)-2,3-dihydroxy-3-methylbutanoate = 3-methyl-2-oxobutanoate + H2O. It carries out the reaction (2R,3R)-2,3-dihydroxy-3-methylpentanoate = (S)-3-methyl-2-oxopentanoate + H2O. The protein operates within amino-acid biosynthesis; L-isoleucine biosynthesis; L-isoleucine from 2-oxobutanoate: step 3/4. It functions in the pathway amino-acid biosynthesis; L-valine biosynthesis; L-valine from pyruvate: step 3/4. Functionally, functions in the biosynthesis of branched-chain amino acids. Catalyzes the dehydration of (2R,3R)-2,3-dihydroxy-3-methylpentanoate (2,3-dihydroxy-3-methylvalerate) into 2-oxo-3-methylpentanoate (2-oxo-3-methylvalerate) and of (2R)-2,3-dihydroxy-3-methylbutanoate (2,3-dihydroxyisovalerate) into 2-oxo-3-methylbutanoate (2-oxoisovalerate), the penultimate precursor to L-isoleucine and L-valine, respectively. The sequence is that of Dihydroxy-acid dehydratase from Shigella sonnei (strain Ss046).